A 441-amino-acid chain; its full sequence is Glutamyl-tRNA reductase (441 aa).

Residues 49-52 (TCNR), Ser-109, 114-116 (EDQ), and Gln-120 contribute to the substrate site. Cys-50 (nucleophile) is an active-site residue. 190-195 (GAGKMS) contacts NADP(+).

This sequence belongs to the glutamyl-tRNA reductase family. As to quaternary structure, homodimer.

The catalysed reaction is (S)-4-amino-5-oxopentanoate + tRNA(Glu) + NADP(+) = L-glutamyl-tRNA(Glu) + NADPH + H(+). The protein operates within porphyrin-containing compound metabolism; protoporphyrin-IX biosynthesis; 5-aminolevulinate from L-glutamyl-tRNA(Glu): step 1/2. Functionally, catalyzes the NADPH-dependent reduction of glutamyl-tRNA(Glu) to glutamate 1-semialdehyde (GSA). The sequence is that of Glutamyl-tRNA reductase from Moorella thermoacetica (strain ATCC 39073 / JCM 9320).